The following is a 60-amino-acid chain: Large ribosomal subunit protein uL30 (60 aa).

It belongs to the universal ribosomal protein uL30 family. As to quaternary structure, part of the 50S ribosomal subunit.

The sequence is that of Large ribosomal subunit protein uL30 from Syntrophobacter fumaroxidans (strain DSM 10017 / MPOB).